The sequence spans 476 residues: Aspartyl/glutamyl-tRNA(Asn/Gln) amidotransferase subunit B (476 aa).

The protein belongs to the GatB/GatE family. GatB subfamily. As to quaternary structure, heterotrimer of A, B and C subunits.

The enzyme catalyses L-glutamyl-tRNA(Gln) + L-glutamine + ATP + H2O = L-glutaminyl-tRNA(Gln) + L-glutamate + ADP + phosphate + H(+). It carries out the reaction L-aspartyl-tRNA(Asn) + L-glutamine + ATP + H2O = L-asparaginyl-tRNA(Asn) + L-glutamate + ADP + phosphate + 2 H(+). Allows the formation of correctly charged Asn-tRNA(Asn) or Gln-tRNA(Gln) through the transamidation of misacylated Asp-tRNA(Asn) or Glu-tRNA(Gln) in organisms which lack either or both of asparaginyl-tRNA or glutaminyl-tRNA synthetases. The reaction takes place in the presence of glutamine and ATP through an activated phospho-Asp-tRNA(Asn) or phospho-Glu-tRNA(Gln). In Lacticaseibacillus paracasei (strain ATCC 334 / BCRC 17002 / CCUG 31169 / CIP 107868 / KCTC 3260 / NRRL B-441) (Lactobacillus paracasei), this protein is Aspartyl/glutamyl-tRNA(Asn/Gln) amidotransferase subunit B.